The primary structure comprises 142 residues: VapC ribonuclease R02377 (142 aa).

Residues 3–140 form the PINc domain; the sequence is FVDGSVIVAI…YKGNDFSQTD (138 aa). Residues Asp5 and Asp115 each contribute to the Mg(2+) site.

Belongs to the PINc/VapC protein family. The cofactor is Mg(2+).

In terms of biological role, toxic component of a type II toxin-antitoxin (TA) system. An RNase. In Rhizobium meliloti (strain 1021) (Ensifer meliloti), this protein is VapC ribonuclease R02377.